The following is a 379-amino-acid chain: tRNA-specific 2-thiouridylase MnmA (379 aa).

Residues 9–16 and Met-35 each bind ATP; that span reads AMSGGVDS. Residues 94–96 are interaction with target base in tRNA; sequence NPD. Cys-99 acts as the Nucleophile in catalysis. Cys-99 and Cys-195 are disulfide-bonded. Gly-123 is an ATP binding site. The segment at 145 to 147 is interaction with tRNA; the sequence is KDQ. Cys-195 functions as the Cysteine persulfide intermediate in the catalytic mechanism. An interaction with tRNA region spans residues 307 to 308; sequence RY.

It belongs to the MnmA/TRMU family.

The protein resides in the cytoplasm. The catalysed reaction is S-sulfanyl-L-cysteinyl-[protein] + uridine(34) in tRNA + AH2 + ATP = 2-thiouridine(34) in tRNA + L-cysteinyl-[protein] + A + AMP + diphosphate + H(+). Its function is as follows. Catalyzes the 2-thiolation of uridine at the wobble position (U34) of tRNA, leading to the formation of s(2)U34. The polypeptide is tRNA-specific 2-thiouridylase MnmA (Xylella fastidiosa (strain M23)).